The chain runs to 308 residues: Transcription initiation factor TFIID subunit 8 (308 aa).

Residues 1–29 form a disordered region; that stretch reads MADTAAGPGGSGTRPGSKQSTNPADNYHL. An N-acetylalanine modification is found at alanine 2. Polar residues predominate over residues 14–24; that stretch reads RPGSKQSTNPA. A Histone-fold domain is found at 35 to 102; that stretch reads LQVVVSSLLT…VTLVEMGFNV (68 aa). Threonine 128 carries the post-translational modification Phosphothreonine. The segment covering 235–248 has biased composition (acidic residues); it reads MEETDSSEQEEQTD. The interval 235 to 308 is disordered; it reads MEETDSSEQE…PKIRRKKSLS (74 aa). The segment covering 268-281 has biased composition (low complexity); sequence ASVLQQSSSLSGSR. A Phosphoserine modification is found at serine 269. A Nuclear localization signal motif is present at residues 292 to 305; it reads YLRPVKKPKIRRKK. Over residues 295–308 the composition is skewed to basic residues; that stretch reads PVKKPKIRRKKSLS.

It belongs to the TAF8 family. Component of the TFIID basal transcription factor complex, composed of TATA-box-binding protein TBP, and a number of TBP-associated factors (TAFs), including TAF1, TAF2, TAF3, TAF4, TAF5, TAF6, TAF7, TAF8, TAF9, TAF10, TAF11, TAF12 and TAF13. Interacts with TBP, TAF1, TAF6, TAF10, TAF11 and TAF13. Component also of a small TAF complex (SMAT) containing TAF8, TAF10 and SUPT7L. Forms a heterodimer with TAF10. Interaction with TAF10 is mediated mainly via its histone fold domain while interaction with SUPT7L is via its C-terminal region. Low level of expression throughout the brain with slightly higher expression in the hippocampus.

The protein resides in the nucleus. Its subcellular location is the cytoplasm. Its function is as follows. The TFIID basal transcription factor complex plays a major role in the initiation of RNA polymerase II (Pol II)-dependent transcription. TFIID recognizes and binds promoters with or without a TATA box via its subunit TBP, a TATA-box-binding protein, and promotes assembly of the pre-initiation complex (PIC). The TFIID complex consists of TBP and TBP-associated factors (TAFs), including TAF1, TAF2, TAF3, TAF4, TAF5, TAF6, TAF7, TAF8, TAF9, TAF10, TAF11, TAF12 and TAF13. The TFIID complex structure can be divided into 3 modules TFIID-A, TFIID-B, and TFIID-C. TAF8 is involved in forming the TFIID-B module, together with TAF5. Mediates both basal and activator-dependent transcription. Plays a role in the differentiation of preadipocyte fibroblasts to adipocytes, however, does not seem to play a role in differentiation of myoblasts. Required for the integration of TAF10 in the TAF complex. May be important for survival of cells of the inner cell mass which constitute the pluripotent cell population of the early embryo. The sequence is that of Transcription initiation factor TFIID subunit 8 (Taf8) from Mus musculus (Mouse).